A 124-amino-acid polypeptide reads, in one-letter code: Large ribosomal subunit protein eL22 (124 aa).

The protein belongs to the eukaryotic ribosomal protein eL22 family. As to quaternary structure, component of the large ribosomal subunit. Mature ribosomes consist of a small (40S) and a large (60S) subunit. The 40S subunit contains about 32 different proteins and 1 molecule of RNA (18S). The 60S subunit contains 45 different proteins and 3 molecules of RNA (25S, 5.8S and 5S).

The protein resides in the cytoplasm. Functionally, component of the ribosome, a large ribonucleoprotein complex responsible for the synthesis of proteins in the cell. The small ribosomal subunit (SSU) binds messenger RNAs (mRNAs) and translates the encoded message by selecting cognate aminoacyl-transfer RNA (tRNA) molecules. The large subunit (LSU) contains the ribosomal catalytic site termed the peptidyl transferase center (PTC), which catalyzes the formation of peptide bonds, thereby polymerizing the amino acids delivered by tRNAs into a polypeptide chain. The nascent polypeptides leave the ribosome through a tunnel in the LSU and interact with protein factors that function in enzymatic processing, targeting, and the membrane insertion of nascent chains at the exit of the ribosomal tunnel. This Candida albicans (strain SC5314 / ATCC MYA-2876) (Yeast) protein is Large ribosomal subunit protein eL22.